The chain runs to 130 residues: Hydrogenase maturation factor HypA (130 aa).

Position 2 (H2) interacts with Ni(2+). Residues C74, C77, C90, and C93 each contribute to the Zn(2+) site.

Belongs to the HypA/HybF family.

Functionally, involved in the maturation of [NiFe] hydrogenases. Required for nickel insertion into the metal center of the hydrogenase. The protein is Hydrogenase maturation factor HypA of Desulfatibacillum aliphaticivorans.